Consider the following 562-residue polypeptide: Apical membrane antigen 1 (562 aa).

The signal sequence occupies residues 1–21 (MNKIYCILFLSAQCLVHMGKC). At 22–484 (EPNQKPSRLT…QYAQGESKNQ (463 aa)) the chain is on the extracellular side. N-linked (GlcNAc...) asparagine glycosylation is found at Asn-84 and Asn-176. 8 cysteine pairs are disulfide-bonded: Cys-94-Cys-247, Cys-162-Cys-192, Cys-208-Cys-220, Cys-265-Cys-363, Cys-282-Cys-354, Cys-388-Cys-444, Cys-432-Cys-449, and Cys-434-Cys-451. An N-linked (GlcNAc...) asparagine glycan is attached at Asn-226. N-linked (GlcNAc...) asparagine glycans are attached at residues Asn-405 and Asn-441. A helical transmembrane segment spans residues 485 to 507 (MLLIIIGITGGVCVVALASMFYF). The Cytoplasmic portion of the chain corresponds to 508–562 (RKKAHNDKYDKMEQADGYGKPTTRKDEMLDPEASFWGEEKRASHTTPVLMEKPYY). The interval 519–543 (MEQADGYGKPTTRKDEMLDPEASFW) is disordered.

This sequence belongs to the apicomplexan parasites AMA1 family.

It is found in the membrane. Involved in parasite invasion of erythrocytes. This is Apical membrane antigen 1 (AMA-1) from Plasmodium fragile.